The sequence spans 530 residues: CTP synthase (530 aa).

Residues 1 to 264 (MPKLIIVTGG…GDFLTRRLRL (264 aa)) form an amidoligase domain region. S13 contacts CTP. Position 13 (S13) interacts with UTP. 14–19 (GVGKGV) contacts ATP. Y54 contacts L-glutamine. An ATP-binding site is contributed by D71. The Mg(2+) site is built by D71 and E139. CTP-binding positions include 146–148 (DYE), 185–190 (KTKPLQ), and K221. UTP is bound by residues 185 to 190 (KTKPLQ) and K221. One can recognise a Glutamine amidotransferase type-1 domain in the interval 289–530 (SVGMCGKYVE…LLKAALFAKR (242 aa)). G351 contacts L-glutamine. The Nucleophile; for glutamine hydrolysis role is filled by C378. Residues 379 to 382 (FGMQ), E402, and R459 contribute to the L-glutamine site. Residues H504 and E506 contribute to the active site.

This sequence belongs to the CTP synthase family. In terms of assembly, homotetramer.

It carries out the reaction UTP + L-glutamine + ATP + H2O = CTP + L-glutamate + ADP + phosphate + 2 H(+). The enzyme catalyses L-glutamine + H2O = L-glutamate + NH4(+). The catalysed reaction is UTP + NH4(+) + ATP = CTP + ADP + phosphate + 2 H(+). Its pathway is pyrimidine metabolism; CTP biosynthesis via de novo pathway; CTP from UDP: step 2/2. With respect to regulation, allosterically activated by GTP, when glutamine is the substrate; GTP has no effect on the reaction when ammonia is the substrate. The allosteric effector GTP functions by stabilizing the protein conformation that binds the tetrahedral intermediate(s) formed during glutamine hydrolysis. Inhibited by the product CTP, via allosteric rather than competitive inhibition. Catalyzes the ATP-dependent amination of UTP to CTP with either L-glutamine or ammonia as the source of nitrogen. Regulates intracellular CTP levels through interactions with the four ribonucleotide triphosphates. This Pyrobaculum aerophilum (strain ATCC 51768 / DSM 7523 / JCM 9630 / CIP 104966 / NBRC 100827 / IM2) protein is CTP synthase.